Here is a 69-residue protein sequence, read N- to C-terminus: uncharacterized protein (69 aa).

Positions M1 to S21 are cleaved as a signal peptide.

The protein resides in the secreted. This is an uncharacterized protein from Dictyostelium discoideum (Social amoeba).